We begin with the raw amino-acid sequence, 391 residues long: Ferrochelatase (391 aa).

The Fe cation site is built by His196 and Glu281.

The protein belongs to the ferrochelatase family.

It is found in the cytoplasm. It carries out the reaction heme b + 2 H(+) = protoporphyrin IX + Fe(2+). The protein operates within porphyrin-containing compound metabolism; protoheme biosynthesis; protoheme from protoporphyrin-IX: step 1/1. Functionally, catalyzes the ferrous insertion into protoporphyrin IX. The sequence is that of Ferrochelatase from Prochlorococcus marinus (strain MIT 9301).